We begin with the raw amino-acid sequence, 122 residues long: Large ribosomal subunit protein uL14 (122 aa).

Belongs to the universal ribosomal protein uL14 family. As to quaternary structure, part of the 50S ribosomal subunit. Forms a cluster with proteins L3 and L19. In the 70S ribosome, L14 and L19 interact and together make contacts with the 16S rRNA in bridges B5 and B8.

Functionally, binds to 23S rRNA. Forms part of two intersubunit bridges in the 70S ribosome. This Streptococcus pneumoniae (strain JJA) protein is Large ribosomal subunit protein uL14.